Consider the following 543-residue polypeptide: Protein P78/83 (543 aa).

Disordered stretches follow at residues 147 to 222 (QALP…QPAA), 235 to 325 (RNEK…SLSN), and 373 to 400 (MAKS…ANTP). Pro residues predominate over residues 182–221 (AAPPPPPSPVPNIPAPPPPPPPSMSELPPAPPMPTEPQPA). A WH2 domain is found at 226 to 246 (DRQQLLEAIRNEKNRTRLRPV). Positions 271–321 (PKPPSASPPPPPPPPPPPAPPAPPPMVDLSSAPPPPPLVDLPSEMLPPPAP) are enriched in pro residues. Polar residues predominate over residues 375–384 (KSSSEATSND).

As to quaternary structure, forms a complex with proteins C42 and E27. Interacts with host actin-related protein 2/3 complex. Interacts with protein Ac102.

It is found in the host cytoplasm. Its subcellular location is the host nucleus. Functionally, plays a role in the transport of the nucleocapsids from the cytoplasm toward the host nucleus together with the host actin-polymerizing Arp2/3 complex. This is Protein P78/83 (P61) from Lepidoptera (butterflies and moths).